The chain runs to 382 residues: Non-structural maintenance of chromosomes element 4 homolog A (382 aa).

Positions Met-1–Arg-21 are enriched in basic and acidic residues. Positions Met-1 to Ser-80 are disordered. The span at Arg-31–Gly-41 shows a compositional bias: low complexity. Residues Ala-42–Leu-55 show a composition bias toward basic and acidic residues. The segment covering Glu-56 to Asp-78 has biased composition (acidic residues). Thr-342 is modified (phosphothreonine). Ser-374 bears the Phosphoserine mark.

The protein belongs to the NSE4 family. Component of the SMC5-SMC6 complex which consists at least of SMC5, SMC6, NSMCE2, NSMCE1, NSMCE4A or EID3 and NSMCE3. NSMCE1, NSMCE4A or EID3 and NSMCE3 probably form a subcomplex that bridges the head domains of the SMC5:SMC6 heterodimer. Interacts with NSMCE3.

The protein resides in the nucleus. The protein localises to the chromosome. It localises to the telomere. Its function is as follows. Component of the SMC5-SMC6 complex, a complex involved in repair of DNA double-strand breaks by homologous recombination. The complex may promote sister chromatid homologous recombination by recruiting the SMC1-SMC3 cohesin complex to double-strand breaks. The complex is required for telomere maintenance via recombination and mediates sumoylation of shelterin complex (telosome) components. In Bos taurus (Bovine), this protein is Non-structural maintenance of chromosomes element 4 homolog A (NSMCE4A).